Here is a 72-residue protein sequence, read N- to C-terminus: Defensin-like protein 35 (72 aa).

A signal peptide spans 1–22; that stretch reads MASNKISFSFVLCLYMCSLLDA. 3 cysteine pairs are disulfide-bonded: C32-C58, C44-C67, and C48-C69.

Belongs to the DEFL family.

The protein resides in the secreted. The sequence is that of Defensin-like protein 35 from Arabidopsis thaliana (Mouse-ear cress).